Consider the following 129-residue polypeptide: Small ribosomal subunit protein uS11 (129 aa).

Belongs to the universal ribosomal protein uS11 family. In terms of assembly, part of the 30S ribosomal subunit. Interacts with proteins S7 and S18. Binds to IF-3.

Functionally, located on the platform of the 30S subunit, it bridges several disparate RNA helices of the 16S rRNA. Forms part of the Shine-Dalgarno cleft in the 70S ribosome. In Anoxybacillus flavithermus (strain DSM 21510 / WK1), this protein is Small ribosomal subunit protein uS11.